Consider the following 142-residue polypeptide: Large ribosomal subunit protein uL11 (142 aa).

Belongs to the universal ribosomal protein uL11 family. As to quaternary structure, part of the ribosomal stalk of the 50S ribosomal subunit. Interacts with L10 and the large rRNA to form the base of the stalk. L10 forms an elongated spine to which L12 dimers bind in a sequential fashion forming a multimeric L10(L12)X complex. One or more lysine residues are methylated.

Functionally, forms part of the ribosomal stalk which helps the ribosome interact with GTP-bound translation factors. The protein is Large ribosomal subunit protein uL11 of Vibrio vulnificus (strain YJ016).